A 217-amino-acid polypeptide reads, in one-letter code: Peptide methionine sulfoxide reductase MsrA (217 aa).

C54 is an active-site residue.

Belongs to the MsrA Met sulfoxide reductase family.

It catalyses the reaction L-methionyl-[protein] + [thioredoxin]-disulfide + H2O = L-methionyl-(S)-S-oxide-[protein] + [thioredoxin]-dithiol. It carries out the reaction [thioredoxin]-disulfide + L-methionine + H2O = L-methionine (S)-S-oxide + [thioredoxin]-dithiol. Its function is as follows. Has an important function as a repair enzyme for proteins that have been inactivated by oxidation. Catalyzes the reversible oxidation-reduction of methionine sulfoxide in proteins to methionine. The protein is Peptide methionine sulfoxide reductase MsrA of Maricaulis maris (strain MCS10) (Caulobacter maris).